Consider the following 396-residue polypeptide: Lipid-A-disaccharide synthase (396 aa).

The protein belongs to the LpxB family.

It carries out the reaction a lipid X + a UDP-2-N,3-O-bis[(3R)-3-hydroxyacyl]-alpha-D-glucosamine = a lipid A disaccharide + UDP + H(+). Its pathway is bacterial outer membrane biogenesis; LPS lipid A biosynthesis. Condensation of UDP-2,3-diacylglucosamine and 2,3-diacylglucosamine-1-phosphate to form lipid A disaccharide, a precursor of lipid A, a phosphorylated glycolipid that anchors the lipopolysaccharide to the outer membrane of the cell. The chain is Lipid-A-disaccharide synthase from Rhodopseudomonas palustris (strain BisB18).